The sequence spans 605 residues: Elongation factor 4 (605 aa).

A tr-type G domain is found at 9-192 (SRTRNFCIIA…AIIARIPSPK (184 aa)). GTP is bound by residues 21 to 26 (DHGKST) and 139 to 142 (NKID).

It belongs to the TRAFAC class translation factor GTPase superfamily. Classic translation factor GTPase family. LepA subfamily.

Its subcellular location is the cell inner membrane. It catalyses the reaction GTP + H2O = GDP + phosphate + H(+). In terms of biological role, required for accurate and efficient protein synthesis under certain stress conditions. May act as a fidelity factor of the translation reaction, by catalyzing a one-codon backward translocation of tRNAs on improperly translocated ribosomes. Back-translocation proceeds from a post-translocation (POST) complex to a pre-translocation (PRE) complex, thus giving elongation factor G a second chance to translocate the tRNAs correctly. Binds to ribosomes in a GTP-dependent manner. The protein is Elongation factor 4 of Chlorobium limicola (strain DSM 245 / NBRC 103803 / 6330).